Reading from the N-terminus, the 638-residue chain is Probable potassium transport system protein Kup (638 aa).

Helical transmembrane passes span Leu-25–Leu-45, Val-65–Val-85, Ala-114–Ile-134, Pro-152–Ile-172, Phe-184–Val-204, Leu-226–Leu-246, Ala-262–Ile-282, Pro-291–Ala-311, Ile-352–Phe-372, Tyr-382–Val-402, Leu-410–Asn-430, and Val-434–Thr-454.

The protein belongs to the HAK/KUP transporter (TC 2.A.72) family.

Its subcellular location is the cell inner membrane. It carries out the reaction K(+)(in) + H(+)(in) = K(+)(out) + H(+)(out). In terms of biological role, transport of potassium into the cell. Likely operates as a K(+):H(+) symporter. The chain is Probable potassium transport system protein Kup from Burkholderia lata (strain ATCC 17760 / DSM 23089 / LMG 22485 / NCIMB 9086 / R18194 / 383).